Reading from the N-terminus, the 251-residue chain is Myozenin-3 (251 aa).

Position 31 is a phosphoserine (Ser31). The binding to ACTN2, PPP3CA and TCAP stretch occupies residues 50–67 (LLFQKRQRRVQKFTFELA). Positions 67–110 (AASQRAMLAGSARRKVTGTAESGTVANANGPEGPNYRSELHIFP) are binding to FLNC. The interval 79–102 (RRKVTGTAESGTVANANGPEGPNY) is disordered. Positions 186–207 (PSPNDYRNFNKTPVPFGGPLVG) are binding to ACTN2.

It belongs to the myozenin family. In terms of assembly, interacts with ACTN2, LDB3, FLNC, PPP3CA and TCAP. In terms of tissue distribution, expressed specifically in skeletal muscle. Not detected in heart.

It is found in the cytoplasm. It localises to the myofibril. The protein localises to the sarcomere. The protein resides in the z line. In terms of biological role, myozenins may serve as intracellular binding proteins involved in linking Z line proteins such as alpha-actinin, gamma-filamin, TCAP/telethonin, LDB3/ZASP and localizing calcineurin signaling to the sarcomere. Plays an important role in the modulation of calcineurin signaling. May play a role in myofibrillogenesis. The sequence is that of Myozenin-3 from Homo sapiens (Human).